A 1014-amino-acid chain; its full sequence is Probable transport protein MmpL11 (1014 aa).

12 consecutive transmembrane segments (helical) span residues 13 to 33 (WLVF…AMTQ), 156 to 173 (VRLY…VAAN), 188 to 208 (IILI…VPLA), 235 to 255 (TSTV…FILM), 279 to 299 (GLAV…IYLI), 311 to 331 (AILA…AALA), 373 to 393 (ASAA…MMLG), 530 to 550 (TEPL…LISI), 560 to 580 (VLMT…VFQW), 598 to 618 (VPPL…IFLL), 649 to 669 (AALI…PLVA), and 671 to 691 (IGVA…LVLV). Residues 783 to 802 (SDRVLPGAATQESEEDPAMG) form a disordered region.

It belongs to the resistance-nodulation-cell division (RND) (TC 2.A.6) family. MmpL subfamily.

It localises to the cell membrane. The polypeptide is Probable transport protein MmpL11 (mmpL11) (Mycobacterium leprae (strain TN)).